The sequence spans 169 residues: Putative glycine cleavage system H protein, mitochondrial (169 aa).

The Lipoyl-binding domain occupies 60–142 (VGTVGITSYA…EEEGWICKIK (83 aa)). K101 bears the N6-lipoyllysine mark. S131 carries the phosphoserine modification.

It belongs to the GcvH family. In terms of assembly, component of the glycine decarboxylase complex (GDC), which is composed of four proteins: P, T, L and H. (R)-lipoate serves as cofactor.

The protein localises to the mitochondrion. Its function is as follows. The glycine cleavage system (glycine decarboxylase complex) catalyzes the degradation of glycine. The H protein shuttles the methylamine group of glycine from the P protein to the T protein. This chain is Putative glycine cleavage system H protein, mitochondrial (gcv3), found in Schizosaccharomyces pombe (strain 972 / ATCC 24843) (Fission yeast).